The following is a 63-amino-acid chain: Hyphancin-3D (63 aa).

The signal sequence occupies residues 1-22; that stretch reads MNFSRIIFLVFACFVALASVSA. The propeptide at 23-26 is removed by a dipeptidylpeptidase; sequence APEP. Leucine amide is present on leucine 61.

This sequence belongs to the cecropin family.

It is found in the secreted. In terms of biological role, has antibacterial activity. In Hyphantria cunea (Fall webworm moth), this protein is Hyphancin-3D.